Consider the following 278-residue polypeptide: tRNA pseudouridine synthase A (278 aa).

D51 acts as the Nucleophile in catalysis. Substrate is bound at residue Y109.

This sequence belongs to the tRNA pseudouridine synthase TruA family. As to quaternary structure, homodimer.

The catalysed reaction is uridine(38/39/40) in tRNA = pseudouridine(38/39/40) in tRNA. Formation of pseudouridine at positions 38, 39 and 40 in the anticodon stem and loop of transfer RNAs. This Paracidovorax citrulli (strain AAC00-1) (Acidovorax citrulli) protein is tRNA pseudouridine synthase A.